The following is a 338-amino-acid chain: Ketol-acid reductoisomerase (NADP(+)) (338 aa).

The KARI N-terminal Rossmann domain maps to 1–181; the sequence is MKVFYDKDAD…GGGRAGIIET (181 aa). NADP(+) contacts are provided by residues 24 to 27, arginine 47, and serine 52; that span reads YGSQ. Residue histidine 107 is part of the active site. Residue glycine 133 coordinates NADP(+). The 146-residue stretch at 182-327 folds into the KARI C-terminal knotted domain; that stretch reads NFREETETDL…SKLRAMMPWI (146 aa). Mg(2+) is bound by residues aspartate 190, glutamate 194, glutamate 226, and glutamate 230. Position 251 (serine 251) interacts with substrate.

The protein belongs to the ketol-acid reductoisomerase family. It depends on Mg(2+) as a cofactor.

It catalyses the reaction (2R)-2,3-dihydroxy-3-methylbutanoate + NADP(+) = (2S)-2-acetolactate + NADPH + H(+). The catalysed reaction is (2R,3R)-2,3-dihydroxy-3-methylpentanoate + NADP(+) = (S)-2-ethyl-2-hydroxy-3-oxobutanoate + NADPH + H(+). Its pathway is amino-acid biosynthesis; L-isoleucine biosynthesis; L-isoleucine from 2-oxobutanoate: step 2/4. The protein operates within amino-acid biosynthesis; L-valine biosynthesis; L-valine from pyruvate: step 2/4. Its function is as follows. Involved in the biosynthesis of branched-chain amino acids (BCAA). Catalyzes an alkyl-migration followed by a ketol-acid reduction of (S)-2-acetolactate (S2AL) to yield (R)-2,3-dihydroxy-isovalerate. In the isomerase reaction, S2AL is rearranged via a Mg-dependent methyl migration to produce 3-hydroxy-3-methyl-2-ketobutyrate (HMKB). In the reductase reaction, this 2-ketoacid undergoes a metal-dependent reduction by NADPH to yield (R)-2,3-dihydroxy-isovalerate. The chain is Ketol-acid reductoisomerase (NADP(+)) from Paraburkholderia xenovorans (strain LB400).